A 380-amino-acid polypeptide reads, in one-letter code: Queuine tRNA-ribosyltransferase (380 aa).

The active-site Proton acceptor is the Asp95. Substrate-binding positions include 95–99 (DSGGF), Asp149, Gln192, and Gly219. Positions 250 to 256 (GVGSADA) are RNA binding. The active-site Nucleophile is the Asp269. An RNA binding; important for wobble base 34 recognition region spans residues 274–278 (TRIAR). The Zn(2+) site is built by Cys307, Cys309, Cys312, and His338.

It belongs to the queuine tRNA-ribosyltransferase family. In terms of assembly, homodimer. Within each dimer, one monomer is responsible for RNA recognition and catalysis, while the other monomer binds to the replacement base PreQ1. Requires Zn(2+) as cofactor.

It catalyses the reaction 7-aminomethyl-7-carbaguanine + guanosine(34) in tRNA = 7-aminomethyl-7-carbaguanosine(34) in tRNA + guanine. It participates in tRNA modification; tRNA-queuosine biosynthesis. In terms of biological role, catalyzes the base-exchange of a guanine (G) residue with the queuine precursor 7-aminomethyl-7-deazaguanine (PreQ1) at position 34 (anticodon wobble position) in tRNAs with GU(N) anticodons (tRNA-Asp, -Asn, -His and -Tyr). Catalysis occurs through a double-displacement mechanism. The nucleophile active site attacks the C1' of nucleotide 34 to detach the guanine base from the RNA, forming a covalent enzyme-RNA intermediate. The proton acceptor active site deprotonates the incoming PreQ1, allowing a nucleophilic attack on the C1' of the ribose to form the product. After dissociation, two additional enzymatic reactions on the tRNA convert PreQ1 to queuine (Q), resulting in the hypermodified nucleoside queuosine (7-(((4,5-cis-dihydroxy-2-cyclopenten-1-yl)amino)methyl)-7-deazaguanosine). This is Queuine tRNA-ribosyltransferase from Lactiplantibacillus plantarum (strain ATCC BAA-793 / NCIMB 8826 / WCFS1) (Lactobacillus plantarum).